The following is a 194-amino-acid chain: MRLCDKDIERYLDEGIISLTPRPSNEKISGATIDVRLGNSFRVFREHSTPYIDLSGPREEMTAQLNRVMSDEILIADDEAFFLHPGELALATTLESVKLPANIVGWLDGRSSLARLGLMVHVTAHRIDPGWEGKIVLEFFNAGKLPLALRPNMAIGALSFEILSGYAEHPYNARKDAKYKNQQSAVFSRIDKDE.

Residues 110 to 115 (RSSLAR), Asp-128, 136 to 138 (VLE), Tyr-171, Lys-178, and Gln-182 contribute to the dCTP site. Glu-138 serves as the catalytic Proton donor/acceptor.

This sequence belongs to the dCTP deaminase family. As to quaternary structure, homotrimer.

The catalysed reaction is dCTP + H2O + H(+) = dUTP + NH4(+). Its pathway is pyrimidine metabolism; dUMP biosynthesis; dUMP from dCTP (dUTP route): step 1/2. Functionally, catalyzes the deamination of dCTP to dUTP. The protein is dCTP deaminase of Glaesserella parasuis serovar 5 (strain SH0165) (Haemophilus parasuis).